The following is a 647-amino-acid chain: Acetyl-coenzyme A synthetase (647 aa).

Residues 190–193 (RGGR) and Thr310 contribute to the CoA site. Residues 386–388 (GEP), 410–415 (DTWWQT), Asp499, and Arg514 contribute to the ATP site. Ser522 lines the CoA pocket. Arg525 is a binding site for ATP. Mg(2+) is bound by residues Val536, His538, and Val541. Residue Arg583 participates in CoA binding. Lys608 carries the post-translational modification N6-acetyllysine.

The protein belongs to the ATP-dependent AMP-binding enzyme family. The cofactor is Mg(2+). In terms of processing, acetylated. Deacetylation by the SIR2-homolog deacetylase activates the enzyme.

It catalyses the reaction acetate + ATP + CoA = acetyl-CoA + AMP + diphosphate. Its function is as follows. Catalyzes the conversion of acetate into acetyl-CoA (AcCoA), an essential intermediate at the junction of anabolic and catabolic pathways. AcsA undergoes a two-step reaction. In the first half reaction, AcsA combines acetate with ATP to form acetyl-adenylate (AcAMP) intermediate. In the second half reaction, it can then transfer the acetyl group from AcAMP to the sulfhydryl group of CoA, forming the product AcCoA. This chain is Acetyl-coenzyme A synthetase, found in Xylella fastidiosa (strain 9a5c).